Consider the following 105-residue polypeptide: Small ribosomal subunit protein uS10 (105 aa).

Belongs to the universal ribosomal protein uS10 family. Part of the 30S ribosomal subunit.

Involved in the binding of tRNA to the ribosomes. The protein is Small ribosomal subunit protein uS10 of Cyanothece sp. (strain PCC 7425 / ATCC 29141).